The following is a 454-amino-acid chain: Flagellar hook protein FlgE (454 aa).

This sequence belongs to the flagella basal body rod proteins family.

The protein localises to the bacterial flagellum basal body. A flexible structure which links the flagellar filament to the drive apparatus in the basal body. Absence of the gene leads to absence of the hook protein, lack of the flagellar filament and thus loss of mobility. Approximately wild-type levels of the flagellar subunits are still produced and accumulate mostly in the cytosol. The sequence is that of Flagellar hook protein FlgE (flgE) from Helicobacter mustelae.